The sequence spans 932 residues: Protocadherin gamma-A12 (932 aa).

Positions 1-29 (MIPARLHRDYKGLVLLGILLGTLWETGCT) are cleaved as a signal peptide. Cadherin domains lie at 30 to 133 (QIRY…APYF), 134 to 242 (RESE…APAF), 243 to 347 (AQPE…APEV), 348 to 452 (VLTS…PPVF), 453 to 562 (PQAS…APEI), and 570 to 683 (DGST…SPAN). Residues 30–692 (QIRYSVPEEL…NSETSDLTLY (663 aa)) are Extracellular-facing. N-linked (GlcNAc...) asparagine glycans are attached at residues Asn265, Asn419, and Asn545. A helical transmembrane segment spans residues 693–713 (LVVAVAAVSCVFLAFVILLLA). Residues 714-932 (LRLRRWHKSR…KKKSGKKEKK (219 aa)) are Cytoplasmic-facing. Disordered stretches follow at residues 803 to 841 (SHGLIEQAPPNTDWRFSQAQRPGTSGSQNGDDTGTWPNN) and 902 to 932 (ATLTNAAGKRDGKAPAGGNGNKKKSGKKEKK). Polar residues predominate over residues 816 to 841 (WRFSQAQRPGTSGSQNGDDTGTWPNN). Over residues 922–932 (NKKKSGKKEKK) the composition is skewed to basic residues.

The protein resides in the cell membrane. Potential calcium-dependent cell-adhesion protein. May be involved in the establishment and maintenance of specific neuronal connections in the brain. The polypeptide is Protocadherin gamma-A12 (PCDHGA12) (Homo sapiens (Human)).